A 286-amino-acid polypeptide reads, in one-letter code: 4-hydroxybenzoate octaprenyltransferase (286 aa).

Helical transmembrane passes span 22-42 (IGTLLLLWPTLWALYLAEKAM), 45-65 (LSVLAIFIFGVFLMRSAGCVI), 98-118 (LFIVLVFCSFLLVLCLNLYTI), 143-163 (FFLGAAFGWSIPMAYGATIEA), 213-233 (IIALLQIITLIFLFSVGYLSQ), 238-255 (YFIVLAIAGLFFVYQCRL), and 266-286 (NAFLNNNYFGLTVFIAVLFGI).

It belongs to the UbiA prenyltransferase family. It depends on Mg(2+) as a cofactor.

The protein resides in the cell inner membrane. The catalysed reaction is all-trans-octaprenyl diphosphate + 4-hydroxybenzoate = 4-hydroxy-3-(all-trans-octaprenyl)benzoate + diphosphate. Its pathway is cofactor biosynthesis; ubiquinone biosynthesis. Catalyzes the prenylation of para-hydroxybenzoate (PHB) with an all-trans polyprenyl group. Mediates the second step in the final reaction sequence of ubiquinone-8 (UQ-8) biosynthesis, which is the condensation of the polyisoprenoid side chain with PHB, generating the first membrane-bound Q intermediate 3-octaprenyl-4-hydroxybenzoate. The chain is 4-hydroxybenzoate octaprenyltransferase from Histophilus somni (strain 2336) (Haemophilus somnus).